We begin with the raw amino-acid sequence, 250 residues long: Probable transcriptional regulatory protein Cvib_1432 (250 aa).

It belongs to the TACO1 family.

The protein resides in the cytoplasm. This Chlorobium phaeovibrioides (strain DSM 265 / 1930) (Prosthecochloris vibrioformis (strain DSM 265)) protein is Probable transcriptional regulatory protein Cvib_1432.